The sequence spans 45 residues: Myotoxin-2 (45 aa).

3 disulfides stabilise this stretch: cysteine 4/cysteine 36, cysteine 11/cysteine 30, and cysteine 18/cysteine 37.

This sequence belongs to the crotamine-myotoxin family. In terms of assembly, monomer. In terms of tissue distribution, expressed by the venom gland.

The protein localises to the secreted. Functionally, cationic peptide that possesses multiple functions. It acts as a cell-penetrating peptide (CPP), and as a potent voltage-gated potassium channel (Kv) inhibitor. It exhibits antimicrobial activities, hind limb paralysis, and severe muscle necrosis by a non-enzymatic mechanism. In Crotalus viridis viridis (Prairie rattlesnake), this protein is Myotoxin-2.